Reading from the N-terminus, the 379-residue chain is Putative 2-hydroxyacid dehydrogenase YGL185C (379 aa).

NAD(+) contacts are provided by residues 207 to 208 (SI), 291 to 293 (LGR), and aspartate 317. Arginine 293 is a catalytic residue. Residue glutamate 322 is part of the active site. Histidine 341 serves as the catalytic Proton donor. Residue 341 to 344 (HLGS) coordinates NAD(+).

It belongs to the D-isomer specific 2-hydroxyacid dehydrogenase family.

The polypeptide is Putative 2-hydroxyacid dehydrogenase YGL185C (Saccharomyces cerevisiae (strain ATCC 204508 / S288c) (Baker's yeast)).